Reading from the N-terminus, the 238-residue chain is ATP-dependent dethiobiotin synthetase BioD (238 aa).

Glu-13 to Val-18 lines the ATP pocket. Thr-17 lines the Mg(2+) pocket. Lys-38 is a catalytic residue. A substrate-binding site is contributed by Thr-42. The Mg(2+) site is built by Arg-59 and Glu-111. ATP is bound by residues Glu-111–Gly-114, Asn-175–Gln-176, and Pro-204–Leu-206.

The protein belongs to the dethiobiotin synthetase family. Homodimer. Requires Mg(2+) as cofactor.

The protein localises to the cytoplasm. The enzyme catalyses (7R,8S)-7,8-diammoniononanoate + CO2 + ATP = (4R,5S)-dethiobiotin + ADP + phosphate + 3 H(+). Its pathway is cofactor biosynthesis; biotin biosynthesis; biotin from 7,8-diaminononanoate: step 1/2. In terms of biological role, catalyzes a mechanistically unusual reaction, the ATP-dependent insertion of CO2 between the N7 and N8 nitrogen atoms of 7,8-diaminopelargonic acid (DAPA, also called 7,8-diammoniononanoate) to form a ureido ring. The chain is ATP-dependent dethiobiotin synthetase BioD from Geobacillus kaustophilus (strain HTA426).